A 340-amino-acid polypeptide reads, in one-letter code: Glycerol-3-phosphate dehydrogenase [NAD(P)+] (340 aa).

Residues Ser15, Tyr16, His36, and Lys110 each contribute to the NADPH site. Residues Lys110, Gly139, and Thr141 each coordinate sn-glycerol 3-phosphate. An NADPH-binding site is contributed by Ala143. Sn-glycerol 3-phosphate contacts are provided by Lys195, Asp248, Ser258, Arg259, and Asn260. Lys195 (proton acceptor) is an active-site residue. Arg259 is a binding site for NADPH. Positions 283 and 285 each coordinate NADPH.

This sequence belongs to the NAD-dependent glycerol-3-phosphate dehydrogenase family.

The protein resides in the cytoplasm. It catalyses the reaction sn-glycerol 3-phosphate + NAD(+) = dihydroxyacetone phosphate + NADH + H(+). The catalysed reaction is sn-glycerol 3-phosphate + NADP(+) = dihydroxyacetone phosphate + NADPH + H(+). It participates in membrane lipid metabolism; glycerophospholipid metabolism. In terms of biological role, catalyzes the reduction of the glycolytic intermediate dihydroxyacetone phosphate (DHAP) to sn-glycerol 3-phosphate (G3P), the key precursor for phospholipid synthesis. This Baumannia cicadellinicola subsp. Homalodisca coagulata protein is Glycerol-3-phosphate dehydrogenase [NAD(P)+].